We begin with the raw amino-acid sequence, 313 residues long: Acetylglutamate kinase (313 aa).

Residues 84-85, arginine 106, and asparagine 210 contribute to the substrate site; that span reads GG.

The protein belongs to the acetylglutamate kinase family. ArgB subfamily.

It localises to the cytoplasm. The catalysed reaction is N-acetyl-L-glutamate + ATP = N-acetyl-L-glutamyl 5-phosphate + ADP. Its pathway is amino-acid biosynthesis; L-arginine biosynthesis; N(2)-acetyl-L-ornithine from L-glutamate: step 2/4. Functionally, catalyzes the ATP-dependent phosphorylation of N-acetyl-L-glutamate. In Gluconacetobacter diazotrophicus (strain ATCC 49037 / DSM 5601 / CCUG 37298 / CIP 103539 / LMG 7603 / PAl5), this protein is Acetylglutamate kinase.